Consider the following 360-residue polypeptide: 3-dehydroquinate synthase (360 aa).

Residues 72–77, 106–110, 130–131, Lys-143, and Lys-152 contribute to the NAD(+) site; these read DGEEYK, GVIGD, and TT. Glu-185, His-248, and His-265 together coordinate Zn(2+).

This sequence belongs to the sugar phosphate cyclases superfamily. Dehydroquinate synthase family. It depends on Co(2+) as a cofactor. Zn(2+) is required as a cofactor. NAD(+) serves as cofactor.

Its subcellular location is the cytoplasm. The catalysed reaction is 7-phospho-2-dehydro-3-deoxy-D-arabino-heptonate = 3-dehydroquinate + phosphate. The protein operates within metabolic intermediate biosynthesis; chorismate biosynthesis; chorismate from D-erythrose 4-phosphate and phosphoenolpyruvate: step 2/7. Catalyzes the conversion of 3-deoxy-D-arabino-heptulosonate 7-phosphate (DAHP) to dehydroquinate (DHQ). In Geotalea uraniireducens (strain Rf4) (Geobacter uraniireducens), this protein is 3-dehydroquinate synthase.